A 53-amino-acid chain; its full sequence is UPF0391 membrane protein Bxeno_A1464 (53 aa).

The next 2 helical transmembrane spans lie at 5 to 25 (AAIFFIIAIIAAVFGFGGIAA) and 30 to 50 (IAKVLFFIFVVIFLVTLLMGV).

Belongs to the UPF0391 family.

Its subcellular location is the cell membrane. The sequence is that of UPF0391 membrane protein Bxeno_A1464 from Paraburkholderia xenovorans (strain LB400).